The sequence spans 768 residues: Valine--tRNA ligase (768 aa).

Residues 37-47 (PTVSGKMHMGH) carry the 'HIGH' region motif. The 'KMSKS' region signature appears at 510-514 (KMSKS). Position 513 (Lys-513) interacts with ATP.

Belongs to the class-I aminoacyl-tRNA synthetase family. ValS type 2 subfamily.

The protein resides in the cytoplasm. It carries out the reaction tRNA(Val) + L-valine + ATP = L-valyl-tRNA(Val) + AMP + diphosphate. Functionally, catalyzes the attachment of valine to tRNA(Val). As ValRS can inadvertently accommodate and process structurally similar amino acids such as threonine, to avoid such errors, it has a 'posttransfer' editing activity that hydrolyzes mischarged Thr-tRNA(Val) in a tRNA-dependent manner. This Picrophilus torridus (strain ATCC 700027 / DSM 9790 / JCM 10055 / NBRC 100828 / KAW 2/3) protein is Valine--tRNA ligase.